We begin with the raw amino-acid sequence, 766 residues long: Ubiquitin carboxyl-terminal hydrolase creB (766 aa).

Residues 1–32 form a disordered region; it reads MGSFLKSFRKDVGSAAPSVGAPPAKKEPQPLP. Over residues 13–23 the composition is skewed to low complexity; it reads GSAAPSVGAPP. The region spanning 55–466 is the USP domain; sequence YGMENFGNTC…CAYVLFYQET (412 aa). The active-site Nucleophile is Cys-64. 2 disordered regions span residues 115-145 and 243-266; these read EALA…KDSP and ESPQ…SRTP. Low complexity predominate over residues 249-263; it reads SDVSDSVIPSSSSGS. His-417 (proton acceptor) is an active-site residue. Residues 526-752 form a disordered region; it reads APTAPQLSTH…HDRSSHGKWR (227 aa). Over residues 548–572 the composition is skewed to pro residues; that stretch reads SPAPDPAPLTSLPPIPPIPETPPAP. A coiled-coil region spans residues 573-620; it reads LTSRKSDLQSKKERVKEEKERKAAEKEKEKQRRKEIETRLKDRQRRED. Composition is skewed to basic and acidic residues over residues 576–643 and 734–747; these read RKSD…RNHA and EQEH…DRSS.

The protein belongs to the peptidase C19 family. Interacts with creA, creC and qutD.

It carries out the reaction Thiol-dependent hydrolysis of ester, thioester, amide, peptide and isopeptide bonds formed by the C-terminal Gly of ubiquitin (a 76-residue protein attached to proteins as an intracellular targeting signal).. Ubiquitin thioesterase component of the regulatory network controlling carbon source utilization through ubiquitination and deubiquitination involving creA, creB, creC, creD and acrB. Deubiquitinates the creA catabolic repressor and the quinate permease qutD. Also plays a role in response to carbon starvation and the control of extracellular proteases activity. This Emericella nidulans (strain FGSC A4 / ATCC 38163 / CBS 112.46 / NRRL 194 / M139) (Aspergillus nidulans) protein is Ubiquitin carboxyl-terminal hydrolase creB (creB).